The sequence spans 22 residues: Mu-conotoxin KIIIB (22 aa).

Positions 1–2 (KR) are excised as a propeptide. 7 cysteine pairs are disulfide-bonded: Cys-5–Cys-13, Cys-5–Cys-19, Cys-5–Cys-20, Cys-6–Cys-13, Cys-6–Cys-19, Cys-8–Cys-19, and Cys-8–Cys-20. Pharmacophore key residues regions lie at residues 14-16 (RDH) and 18-19 (RC). Position 20 is a cysteine amide (Cys-20).

It belongs to the conotoxin M superfamily. Monomer. Post-translationally, toxins with three different disulfide connectivities have been synthesized. The conotoxin mu-KIIIA-P1 shows the connectivity C1-C5, C2-C4, and C3-C6, whereas mu-KIIIA-P2 shows the connectivity C1-C6, C2-C4, and C3-C5. The conotoxin mu-KIIIA-N has the 'native' fold of the mu-conotoxin family (C1-C4, C2-C5, and C3-C6). Mu-KIIIA-P1 and mu-KIIIA-P2 are obtained by both thermodynamic oxidative folding and regioselective synthesis. Mu-KIIIA-P1 is the major oxidative folding product. Mu-KIIIA-N is only obtained by regioselective synthesis. In terms of tissue distribution, expressed by the venom duct.

It is found in the secreted. In terms of biological role, mu-conotoxin KIIIA-P1: mu-conotoxins block voltage-gated sodium channels (Nav). This toxin potently blocks Nav1.2/SCN2A (IC(50)5-124 nM), Nav1.4/SCN4A (IC(50)=20-90 nM), and Nav1.7/SCN9A (IC(50)=290-413 nM). It moderately blocks Nav1.1/SCN1A, and mNav1.6/SCN8A. It also shows a very low activity on Nav1.3/SCN3A. This toxin binds a microsite within the pore different from the tetrodotoxin binding site 1 (tested on Nav1.2). The block is partial, with a residual current that can be completely blocked by TTX. The toxin probably docks at a more superficial site in the outer vestibule of the channel than does TTX. On rNav1.2/SCN2A, it produces a block that is only partially reversible. The block of Nav1.7 is modified when beta-subunits are coexpressed with the alpha subunit. Hence, blocks of channels containing beta-1 and beta-3 subunits are more potent (compared to channels without beta subunits), whereas blocks of channels containing beta-2 and beta-4 subunits are less potent (compared to channels without beta subunits). Mu-conotoxin KIIIA-P2: This toxin potently blocks Nav1.2/SCN2A (Kd=230 nM, IC(50)=1.37 uM) and Nav1.4/SCN4A (Kd=830 nM, IC(50)=2 uM). It also moderately blocks Nav1.7/SCN9A (Kd=1.57 uM, IC(50)=5.4 uM). In addition, this toxin may also inhibit other sodium channels, as does Mu-conotoxin KIIIA-P1. Its function is as follows. Mu-conotoxin KIIIA-N: This toxin moderately blocks Nav1.2/SCN2A (IC(50)=875 nM), Nav1.4/SCN4A (IC(50)=472 nM), and Nav1.7/SCN9A (IC(50)=887 nM). Functionally, mu-conotoxin KIIIB-P1: This toxin potently blocks Nav1.2/SCN2A (Kd=470 nM). In addition, this toxin may also inhibit other sodium channels, as does Mu-conotoxin KIIIA-P1. In terms of biological role, mu-conotoxin KIIIB-P2: This toxin potently blocks Nav1.2/SCN2A (Kd=26 nM). In addition, this toxin may also inhibit other sodium channels, as does Mu-conotoxin KIIIA-P1. The polypeptide is Mu-conotoxin KIIIB (Conus kinoshitai (Kinoshita's cone)).